A 319-amino-acid chain; its full sequence is Quinolinate synthase (319 aa).

Iminosuccinate contacts are provided by His-34 and Ser-51. A [4Fe-4S] cluster-binding site is contributed by Cys-96. Iminosuccinate contacts are provided by residues 122–124 (YIN) and Ser-139. Residue Cys-182 participates in [4Fe-4S] cluster binding. Iminosuccinate-binding positions include 208–210 (HPE) and Thr-225. Residue Cys-276 participates in [4Fe-4S] cluster binding.

This sequence belongs to the quinolinate synthase family. Type 2 subfamily. [4Fe-4S] cluster is required as a cofactor.

The protein localises to the cytoplasm. The catalysed reaction is iminosuccinate + dihydroxyacetone phosphate = quinolinate + phosphate + 2 H2O + H(+). It functions in the pathway cofactor biosynthesis; NAD(+) biosynthesis; quinolinate from iminoaspartate: step 1/1. Catalyzes the condensation of iminoaspartate with dihydroxyacetone phosphate to form quinolinate. The sequence is that of Quinolinate synthase from Thermosynechococcus vestitus (strain NIES-2133 / IAM M-273 / BP-1).